Consider the following 569-residue polypeptide: MRVSKYLLSTQKETPADAEVISHQLMLRAGMIRRNASGLYSWLPTGLRVLRKIEAIVREEMNKAGSVEILMPMVQPADLWVETGRFEKFGPELLRFQDRHNRDFVLGPTHEEVITDIVRKEVNSYKQLPLNLFQIQTKFRDEVRPRFGVMRSREFLMKDAYSFHLDQETMDETYESMFQAYSNILTRLGLAFRPVIADTGSIGGSMSHEFHVLANSGEDLIAYSTGSDYAANIEKAESPMPTQTRGEATQEMSLVDTPNAKTIAELVEQHGVAIEKTVKTLIVKGSSEEAPLVALVIRGDHDLNEVKAEKIPAVHAPFEFADEADIRKAVGAGPGSIGPVGLEIPVYIDHGVSVMSDFAAGANQDNKHLFGINWERNLPQAEAFDLRNIIEGEASPCGQGTIALLRGIEVGHIFQLGKNYSEAMNANVLDQNGKAQTLLMGCYGVGVSRMVAAAIEQNHDDRGIIWPDAIAPFRVGILPMNMHKSHRVQDMAEQLYKDLSDAGIEVLFDDRKERAGVMFADMELIGLPHVVVIGDRNIDAGVFEYKNRRTGEKQEVPFDQIVEFLKSAQ.

It belongs to the class-II aminoacyl-tRNA synthetase family. ProS type 1 subfamily. As to quaternary structure, homodimer.

It is found in the cytoplasm. The catalysed reaction is tRNA(Pro) + L-proline + ATP = L-prolyl-tRNA(Pro) + AMP + diphosphate. Functionally, catalyzes the attachment of proline to tRNA(Pro) in a two-step reaction: proline is first activated by ATP to form Pro-AMP and then transferred to the acceptor end of tRNA(Pro). As ProRS can inadvertently accommodate and process non-cognate amino acids such as alanine and cysteine, to avoid such errors it has two additional distinct editing activities against alanine. One activity is designated as 'pretransfer' editing and involves the tRNA(Pro)-independent hydrolysis of activated Ala-AMP. The other activity is designated 'posttransfer' editing and involves deacylation of mischarged Ala-tRNA(Pro). The misacylated Cys-tRNA(Pro) is not edited by ProRS. The chain is Proline--tRNA ligase from Shewanella woodyi (strain ATCC 51908 / MS32).